Reading from the N-terminus, the 601-residue chain is Sulfite reductase [NADPH] flavoprotein alpha-component (601 aa).

Residues 65–203 (ITIISASQTG…NYNKWSQDLL (139 aa)) enclose the Flavodoxin-like domain. Residues 71–76 (SQTGNA), 118–121 (STQG), and 154–163 (LGDTSYNLFC) each bind FMN. The FAD-binding FR-type domain maps to 236–450 (KNPAEGIILT…IQTNDNFRLP (215 aa)). Residues Thr-324, Ile-358, 388–391 (RLYS), 406–408 (TVG), and 421–424 (GGAS) each bind FAD. Residues 521 to 522 (SQ), 527 to 531 (KIYVQ), and Asp-563 each bind NADP(+). Residue Tyr-601 coordinates FAD.

Belongs to the NADPH-dependent sulphite reductase flavoprotein subunit CysJ family. It in the N-terminal section; belongs to the flavodoxin family. The protein in the C-terminal section; belongs to the flavoprotein pyridine nucleotide cytochrome reductase family. As to quaternary structure, alpha(8)-beta(8). The alpha component is a flavoprotein, the beta component is a hemoprotein. Requires FAD as cofactor. The cofactor is FMN.

It carries out the reaction hydrogen sulfide + 3 NADP(+) + 3 H2O = sulfite + 3 NADPH + 4 H(+). It participates in sulfur metabolism; hydrogen sulfide biosynthesis; hydrogen sulfide from sulfite (NADPH route): step 1/1. Component of the sulfite reductase complex that catalyzes the 6-electron reduction of sulfite to sulfide. This is one of several activities required for the biosynthesis of L-cysteine from sulfate. The flavoprotein component catalyzes the electron flow from NADPH -&gt; FAD -&gt; FMN to the hemoprotein component. The polypeptide is Sulfite reductase [NADPH] flavoprotein alpha-component (Buchnera aphidicola subsp. Acyrthosiphon pisum (strain APS) (Acyrthosiphon pisum symbiotic bacterium)).